The primary structure comprises 163 residues: Transcription elongation factor GreA (163 aa).

Residues 45-65 are a coiled coil; sequence NAEYHAAREKQAFIEARINEL.

The protein belongs to the GreA/GreB family.

In terms of biological role, necessary for efficient RNA polymerase transcription elongation past template-encoded arresting sites. The arresting sites in DNA have the property of trapping a certain fraction of elongating RNA polymerases that pass through, resulting in locked ternary complexes. Cleavage of the nascent transcript by cleavage factors such as GreA or GreB allows the resumption of elongation from the new 3'terminus. GreA releases sequences of 2 to 3 nucleotides. In Helicobacter hepaticus (strain ATCC 51449 / 3B1), this protein is Transcription elongation factor GreA.